The sequence spans 319 residues: Acetylglutamate kinase (319 aa).

Substrate contacts are provided by residues 74–75 (GG), Arg-96, and Asn-210.

This sequence belongs to the acetylglutamate kinase family. ArgB subfamily.

It localises to the cytoplasm. It carries out the reaction N-acetyl-L-glutamate + ATP = N-acetyl-L-glutamyl 5-phosphate + ADP. It participates in amino-acid biosynthesis; L-arginine biosynthesis; N(2)-acetyl-L-ornithine from L-glutamate: step 2/4. In terms of biological role, catalyzes the ATP-dependent phosphorylation of N-acetyl-L-glutamate. The sequence is that of Acetylglutamate kinase from Pseudarthrobacter chlorophenolicus (strain ATCC 700700 / DSM 12829 / CIP 107037 / JCM 12360 / KCTC 9906 / NCIMB 13794 / A6) (Arthrobacter chlorophenolicus).